Here is a 396-residue protein sequence, read N- to C-terminus: Alanine racemase (396 aa).

The active-site Proton acceptor; specific for D-alanine is Lys-46. Residue Lys-46 is modified to N6-(pyridoxal phosphate)lysine. A substrate-binding site is contributed by Arg-145. Tyr-280 acts as the Proton acceptor; specific for L-alanine in catalysis. Met-328 lines the substrate pocket.

Belongs to the alanine racemase family. The cofactor is pyridoxal 5'-phosphate.

It carries out the reaction L-alanine = D-alanine. The protein operates within amino-acid biosynthesis; D-alanine biosynthesis; D-alanine from L-alanine: step 1/1. Catalyzes the interconversion of L-alanine and D-alanine. May also act on other amino acids. In Brucella suis (strain ATCC 23445 / NCTC 10510), this protein is Alanine racemase (alr).